The primary structure comprises 271 residues: ATP synthase subunit a (271 aa).

Helical transmembrane passes span 47-67 (WENI…AYLG), 107-127 (FLGT…VPLM), 133-153 (SLNI…FLNI), 209-229 (ILIG…ETFV), and 235-255 (LPFM…FTLL).

It belongs to the ATPase A chain family. F-type ATPases have 2 components, CF(1) - the catalytic core - and CF(0) - the membrane proton channel. CF(1) has five subunits: alpha(3), beta(3), gamma(1), delta(1), epsilon(1). CF(0) has three main subunits: a(1), b(2) and c(9-12). The alpha and beta chains form an alternating ring which encloses part of the gamma chain. CF(1) is attached to CF(0) by a central stalk formed by the gamma and epsilon chains, while a peripheral stalk is formed by the delta and b chains.

Its subcellular location is the cell inner membrane. Its function is as follows. Key component of the proton channel; it plays a direct role in the translocation of protons across the membrane. The chain is ATP synthase subunit a from Protochlamydia amoebophila (strain UWE25).